The sequence spans 420 residues: Protein STB1 (420 aa).

An N-acetylserine modification is found at Ser-2. Residues 2 to 70 form an interaction with SWI6 region; sequence SQPQMSPEKE…DEDHKTLLEA (69 aa). Ser-7 is subject to Phosphoserine. Disordered regions lie at residues 30–187 and 273–319; these read QLKL…SDNT and DSPS…ELNG. A compositionally biased stretch (basic and acidic residues) spans 43 to 55; sequence RKQDSTTKKRSGE. The residue at position 72 (Ser-72) is a Phosphoserine. Residue Thr-99 is modified to Phosphothreonine. Ser-102 is modified (phosphoserine). Basic and acidic residues predominate over residues 106–122; sequence RKAEDRSQQIKPRKEDT. Over residues 156 to 169 the composition is skewed to low complexity; that stretch reads NNNNSSNHSNNNNN. Positions 277–319 are enriched in polar residues; that stretch reads LYLSNNNGSVQATLSPQQRRKPTTNTLHPPSNVPTTPSRELNG. Phosphothreonine is present on Thr-419.

In terms of assembly, interacts with the ANK repeats of SWI6. The interaction with SWI6 is required for function. Interacts with SIN3. In terms of processing, phosphorylated by CDC28 in a cell cycle-dependent manner, inhibiting the interaction with SWI6.

The protein resides in the cytoplasm. It is found in the nucleus. In terms of biological role, involved in the regulation and timing of MBF-dependent transcription in late G1 of the cell cycle. The polypeptide is Protein STB1 (STB1) (Saccharomyces cerevisiae (strain ATCC 204508 / S288c) (Baker's yeast)).